The following is a 215-amino-acid chain: Vacuolar ATPase assembly integral membrane protein VPH2 (215 aa).

At 1-134 (MFEIKLNDRI…SQINKQIKEQ (134 aa)) the chain is on the cytoplasmic side. A helical transmembrane segment spans residues 135-155 (VTTVFNVLVSVISVVVAIWYW). Topologically, residues 156–167 (TGSSTNFPVHVR) are lumenal. A helical transmembrane segment spans residues 168–186 (LLLCLFFGILVLVADVVVY). The Cytoplasmic portion of the chain corresponds to 187 to 215 (NSYLKKLEEAKVKEKTKVEKKKVLSKITL).

It localises to the endoplasmic reticulum membrane. Required for vacuolar ATPase assembly. The protein is Vacuolar ATPase assembly integral membrane protein VPH2 (VPH2) of Saccharomyces cerevisiae (strain ATCC 204508 / S288c) (Baker's yeast).